A 334-amino-acid polypeptide reads, in one-letter code: Holliday junction branch migration complex subunit RuvB (334 aa).

The interval 4–184 is large ATPase domain (RuvB-L); sequence ADRLISAAVI…FGIVQRLEFY (181 aa). ATP contacts are provided by residues Ile-23, Arg-24, Gly-65, Lys-68, Thr-69, Thr-70, 131-133, Arg-174, Tyr-184, and Arg-221; that span reads EDY. Thr-69 is a binding site for Mg(2+). The interval 185 to 255 is small ATPAse domain (RuvB-S); the sequence is PVADLEHIVS…VAMKALDMLN (71 aa). Positions 258–334 are head domain (RuvB-H); it reads AEGFDFMDRK…YKHFGITREE (77 aa). The DNA site is built by Arg-294, Arg-313, and Arg-318.

This sequence belongs to the RuvB family. Homohexamer. Forms an RuvA(8)-RuvB(12)-Holliday junction (HJ) complex. HJ DNA is sandwiched between 2 RuvA tetramers; dsDNA enters through RuvA and exits via RuvB. An RuvB hexamer assembles on each DNA strand where it exits the tetramer. Each RuvB hexamer is contacted by two RuvA subunits (via domain III) on 2 adjacent RuvB subunits; this complex drives branch migration. In the full resolvosome a probable DNA-RuvA(4)-RuvB(12)-RuvC(2) complex forms which resolves the HJ.

Its subcellular location is the cytoplasm. It catalyses the reaction ATP + H2O = ADP + phosphate + H(+). Its function is as follows. The RuvA-RuvB-RuvC complex processes Holliday junction (HJ) DNA during genetic recombination and DNA repair, while the RuvA-RuvB complex plays an important role in the rescue of blocked DNA replication forks via replication fork reversal (RFR). RuvA specifically binds to HJ cruciform DNA, conferring on it an open structure. The RuvB hexamer acts as an ATP-dependent pump, pulling dsDNA into and through the RuvAB complex. RuvB forms 2 homohexamers on either side of HJ DNA bound by 1 or 2 RuvA tetramers; 4 subunits per hexamer contact DNA at a time. Coordinated motions by a converter formed by DNA-disengaged RuvB subunits stimulates ATP hydrolysis and nucleotide exchange. Immobilization of the converter enables RuvB to convert the ATP-contained energy into a lever motion, pulling 2 nucleotides of DNA out of the RuvA tetramer per ATP hydrolyzed, thus driving DNA branch migration. The RuvB motors rotate together with the DNA substrate, which together with the progressing nucleotide cycle form the mechanistic basis for DNA recombination by continuous HJ branch migration. Branch migration allows RuvC to scan DNA until it finds its consensus sequence, where it cleaves and resolves cruciform DNA. The sequence is that of Holliday junction branch migration complex subunit RuvB from Yersinia pestis bv. Antiqua (strain Angola).